The chain runs to 420 residues: MLSRKIGIDHILKHIENKRVLMRVDFNVPLKEGKVKDPTRIQGSVPSIKKILEQNPKGLVLMSHLGRPDGNRVEKHSMKPVVPKLEELLGTKVTFLNDCVGKDVEEAVKSSRNGEIILLENLRFHPEEEGKYIDAAGNKVKADSKAVKEFRKSLTSLGDLFVNDAFGTAHRAHSSMVGVDHKIRAAGYLLKRELDYFSKALESPNRPFLVVLGGAKVKDKIQLIESMLDKVDEMIIGGGMAFTFLKKIHNIEIGNSLFDEEGYKIVDQLLEKAKAKNVKIHLPVDFLCGDSLEANANTRSFDLKSGIPAGWIGLDAGPKTMAENAEAVARANTIVWNGPQGRFEVDKFKVGSSDLLKHVATRTSQGATSIIGGGDTVNLVQQEKATQKVSHVSTGGGASLELLEGKVLPGVAYLTDIDQL.

(2R)-3-phosphoglycerate-binding residues include Val24, Asp25, Phe26, Asn27, Arg40, Ser63, His64, Gly66, Arg67, Leu122, Arg123, His170, and Arg171. Position 214 (Gly214) interacts with ADP. Residue Gly214 participates in CDP binding. AMP is bound by residues Ala215 and Lys216. Ala215 is a binding site for ATP. Ala215 contributes to the Mg(2+) binding site. Asp219 contacts CDP. Asp219 lines the Mg(2+) pocket. Lys220 is a binding site for AMP. Lys220 provides a ligand contact to ATP. ADP is bound at residue Gly238. Gly238 contacts CDP. AMP is bound by residues Gly239 and Gly313. Residues Gly239 and Gly313 each coordinate ATP. 2 residues coordinate CDP: Gly338 and Phe343. Phe343 lines the ADP pocket. Glu344 serves as a coordination point for AMP. Positions 344, 375, and 376 each coordinate ATP. Residue Asp375 participates in Mg(2+) binding.

The protein belongs to the phosphoglycerate kinase family. In terms of assembly, monomer. Mg(2+) is required as a cofactor.

It carries out the reaction (2R)-3-phosphoglycerate + ATP = (2R)-3-phospho-glyceroyl phosphate + ADP. The protein operates within carbohydrate degradation; glycolysis; pyruvate from D-glyceraldehyde 3-phosphate: step 2/5. This Tetrahymena thermophila protein is Phosphoglycerate kinase (PGK).